A 357-amino-acid polypeptide reads, in one-letter code: Sulfate/thiosulfate import ATP-binding protein CysA (357 aa).

The 235-residue stretch at 3-237 (IQIQGVSKQY…PASPFVYDFL (235 aa)) folds into the ABC transporter domain. ATP is bound at residue 35 to 42 (GPSGSGKT).

The protein belongs to the ABC transporter superfamily. Sulfate/tungstate importer (TC 3.A.1.6) family. The complex is composed of two ATP-binding proteins (CysA), two transmembrane proteins (CysT and CysW) and a solute-binding protein (CysP).

Its subcellular location is the cell membrane. The enzyme catalyses sulfate(out) + ATP + H2O = sulfate(in) + ADP + phosphate + H(+). It catalyses the reaction thiosulfate(out) + ATP + H2O = thiosulfate(in) + ADP + phosphate + H(+). Functionally, part of the ABC transporter complex CysAWTP involved in sulfate/thiosulfate import. Responsible for energy coupling to the transport system. This is Sulfate/thiosulfate import ATP-binding protein CysA from Bacillus cereus (strain ATCC 10987 / NRS 248).